A 376-amino-acid chain; its full sequence is N-acetyldiaminopimelate deacetylase (376 aa).

Aspartate 69 is a catalytic residue. Residue glutamate 128 is the Proton acceptor of the active site.

The protein belongs to the peptidase M20A family. N-acetyldiaminopimelate deacetylase subfamily.

It carries out the reaction N-acetyl-(2S,6S)-2,6-diaminopimelate + H2O = (2S,6S)-2,6-diaminopimelate + acetate. The protein operates within amino-acid biosynthesis; L-lysine biosynthesis via DAP pathway; LL-2,6-diaminopimelate from (S)-tetrahydrodipicolinate (acetylase route): step 3/3. Its function is as follows. Catalyzes the conversion of N-acetyl-diaminopimelate to diaminopimelate and acetate. The protein is N-acetyldiaminopimelate deacetylase of Bacillus cereus (strain B4264).